The sequence spans 447 residues: Probable ethanolamine kinase B (447 aa).

Low complexity predominate over residues 178-208 (STTISTSTSTSTSTSSTSPSTSPSLENSTLS). The tract at residues 178–217 (STTISTSTSTSTSTSSTSPSTSPSLENSTLSPRNMNTQTS) is disordered.

It belongs to the choline/ethanolamine kinase family.

Its subcellular location is the cytoplasm. The enzyme catalyses ethanolamine + ATP = phosphoethanolamine + ADP + H(+). It participates in phospholipid metabolism; phosphatidylethanolamine biosynthesis; phosphatidylethanolamine from ethanolamine: step 1/3. In terms of biological role, highly specific for ethanolamine phosphorylation. May be a rate-controlling step in phosphatidylethanolamine biosynthesis. The sequence is that of Probable ethanolamine kinase B (etnkB) from Dictyostelium discoideum (Social amoeba).